The sequence spans 357 residues: Prostaglandin D2 receptor-like (357 aa).

Topologically, residues M1 to T20 are extracellular. An N-linked (GlcNAc...) asparagine glycan is attached at N2. Residues M21–A41 traverse the membrane as a helical segment. At R42 to P57 the chain is on the cytoplasmic side. The helical transmembrane segment at S58–I78 threads the bilayer. Topologically, residues S79 to A106 are extracellular. N-linked (GlcNAc...) asparagine glycosylation occurs at N89. C104 and C182 are oxidised to a cystine. The helical transmembrane segment at F107–L127 threads the bilayer. Residues E128 to V149 lie on the Cytoplasmic side of the membrane. Residues L150 to F170 traverse the membrane as a helical segment. Topologically, residues G171–S194 are extracellular. A helical membrane pass occupies residues V195–V215. Residues C216–D261 lie on the Cytoplasmic side of the membrane. Residues H262 to Y282 traverse the membrane as a helical segment. At R283–R306 the chain is on the extracellular side. A helical transmembrane segment spans residues F307–F327. Residues R328–L357 lie on the Cytoplasmic side of the membrane.

It belongs to the G-protein coupled receptor 1 family. Strongly expressed in eye and gastrointestinal tract (GIT), moderately in the brain and oviduct and weakly in the epididymis. In the eye, expressed in the epithelium of the iris and ciliary body and in photoreceptor cells of the retina. In the brain, expressed in leptomeninges, choroid plexus and spinal cord (sensory and motor neurons of the dorsal and ventral horns). In the stomach, expressed in the mucous-secreting goblet cells and the columnar epithelium. Expressed in platelets.

The protein resides in the cell membrane. Functionally, receptor for prostaglandin D2 (PGD2). The activity of this receptor is mainly mediated by G(s) proteins that stimulate adenylate cyclase, resulting in an elevation of intracellular cAMP. A mobilization of calcium is also observed, but without formation of inositol 1,4,5-trisphosphate. The chain is Prostaglandin D2 receptor-like (Ptgdrl) from Rattus norvegicus (Rat).